A 93-amino-acid chain; its full sequence is Bombyxin B-11 (93 aa).

The signal sequence occupies residues 1–22; sequence MMKTAVMFILVVVISLTYSSEE. Cystine bridges form between Cys-30-Cys-75, Cys-42-Cys-92, and Cys-74-Cys-79. The propeptide at 49-64 is bombyxin B-11 C peptide; that stretch reads GGAQYAPYWQETYLRS.

This sequence belongs to the insulin family. As to quaternary structure, heterodimer of a B chain and an A chain linked by two disulfide bonds.

Its subcellular location is the secreted. In terms of biological role, brain peptide responsible for activation of prothoracic glands to produce ecdysone in insects. The chain is Bombyxin B-11 (BBXB11) from Bombyx mori (Silk moth).